The primary structure comprises 439 residues: MTDNIMQTIAVIALGCPKNTVEAEYLLGIFQEKGFKISSNLDKADIVVIHTCSFIKAAKAESEKCIRTILDIKKKKSLRVYVSGCLPQLLKEKMSVLFPDIDGFAGTGTLQYLPDLVFGKNFGRFILPPGGLNDSNYRVLSSTIPSAYLKIAEGCGHVCSFCIIPALRGRYESRTMESLVDEVAALAESGIKELILIAQDTTGYGKDIYGAFVLDKLLVKLSKINGLKWIRLLYAYPSSITDGLIEVFKEHKKICSYMDIPIQHASKNVLSAMKRPLNTPGIIEKIKRKLPDIVLRTSIIAGFPGETKKDVNELINFLNRGYFQYAGVFEYSDLKEAVSSKLKRHVRAAAAKERKIMIENAQYNIFQAKIDKIKNNTIEFLVESCLKKGNVYSIKGRSSFQSPEIDGNIILENDKPLTVGGFCKAKVRSVDGYNIKVYI.

One can recognise an MTTase N-terminal domain in the interval 7 to 122; that stretch reads QTIAVIALGC…LPDLVFGKNF (116 aa). Residues C16, C52, C85, C155, C159, and C162 each coordinate [4Fe-4S] cluster. Residues 141 to 369 form the Radical SAM core domain; that stretch reads SSTIPSAYLK…NAQYNIFQAK (229 aa).

The protein belongs to the methylthiotransferase family. RimO subfamily. The cofactor is [4Fe-4S] cluster.

The protein resides in the cytoplasm. It catalyses the reaction L-aspartate(89)-[ribosomal protein uS12]-hydrogen + (sulfur carrier)-SH + AH2 + 2 S-adenosyl-L-methionine = 3-methylsulfanyl-L-aspartate(89)-[ribosomal protein uS12]-hydrogen + (sulfur carrier)-H + 5'-deoxyadenosine + L-methionine + A + S-adenosyl-L-homocysteine + 2 H(+). In terms of biological role, catalyzes the methylthiolation of an aspartic acid residue of ribosomal protein uS12. The sequence is that of Ribosomal protein uS12 methylthiotransferase RimO from Endomicrobium trichonymphae.